A 395-amino-acid chain; its full sequence is ADP-ribosylation factor-like protein 13A (395 aa).

Residues 28 to 35 (GLDNSGKS), 71 to 75 (DLTGD), and 130 to 133 (NKQD) each bind GTP.

This sequence belongs to the small GTPase superfamily. Arf family.

The polypeptide is ADP-ribosylation factor-like protein 13A (Arl13a) (Rattus norvegicus (Rat)).